The following is a 373-amino-acid chain: Transcription factor bHLH87 (373 aa).

The segment at 127 to 227 (SAESENREIT…GGSSNISFQH (101 aa)) is disordered. A compositionally biased stretch (basic and acidic residues) spans 188 to 218 (PQDDSEKGGFKLIYDENQSKSKKPRTEKERG). Positions 275–324 (ISTDPQTVAARQRRERISEKIRVLQTLVPGGTKMDTASMLDEAANYLKFL) constitute a bHLH domain.

As to quaternary structure, homodimer. As to expression, flowers.

The protein resides in the nucleus. The sequence is that of Transcription factor bHLH87 (BHLH87) from Arabidopsis thaliana (Mouse-ear cress).